A 589-amino-acid chain; its full sequence is Kelch-like protein diablo (589 aa).

The interval 1 to 22 (MGDVLISDRPPSPARLSHTSEK) is disordered. Residues 41-108 (CDVVINVSGR…CYTSHIVVEE (68 aa)) enclose the BTB domain. The region spanning 143–245 (CLGIRAFADT…SPKFLVGTVG (103 aa)) is the BACK domain. Kelch repeat units lie at residues 292 to 338 (VLFA…VLND), 340 to 386 (LYAV…VLDG), 387 to 433 (FLYA…VLGG), 435 to 480 (LYAI…VFNN), 482 to 527 (IYAV…VVNG), and 528 to 574 (QLYA…VMRA).

The protein operates within protein modification; protein ubiquitination. Probable substrate-specific adapter of an E3 ubiquitin-protein ligase complex which mediates the ubiquitination and subsequent proteasomal degradation of target proteins. May have a role in synapse differentiation and growth. This is Kelch-like protein diablo from Aedes aegypti (Yellowfever mosquito).